The chain runs to 131 residues: MIPDRIIEQGTLRTDGPRAAVEVRLPWYRALPGSCIAGAELTIDGKTAPAESLRWEMNGAEFTFDELRTNIDEWWFPTDSAVLSGDLDIEADAEHEVTVGLTLYIPYIIISDTETLHIDEKNTKTMKAVAA.

The protein belongs to the C-glycoside deglycosidase beta subunit family. In terms of assembly, heterodimer composed of an alpha subunit (CarB) and a beta subunit (CarC). The cofactor is a divalent metal cation.

It catalyses the reaction 3''-dehydroisovitexin = 1,5-anhydro-D-erythro-hex-1-en-3-ulose + apigenin. It carries out the reaction 3''-dehydroisoorientin = 1,5-anhydro-D-erythro-hex-1-en-3-ulose + luteolin. Functionally, carbon-carbon bond-cleaving enzyme which participates in the metabolism of C-glycosides. Acts on the C6-glycosylated compounds 3''-dehydroisovitexin (3''-oxo-isovitexin) and 3''-dehydroisoorientin (3''-oxo-homoorientin). Shows weak activity with 3'-dehydromangiferin (3'-oxo-mangiferin). The chain is C-glycoside deglycosidase beta subunit from Microbacterium trichothecenolyticum (Aureobacterium trichothecenolyticum).